A 633-amino-acid polypeptide reads, in one-letter code: Histone-lysine N-methyltransferase Su(var)3-9 (633 aa).

A Chromo domain is found at 213 to 271 (YIVEKIESVEVVQFQPVFFVKWLGYDVSANTWESYVNLSDCAEMEKFVERHLQLHQHYI). The Pre-SET domain occupies 407–472 (VGCMCRHQSG…SCTNRVVQNG (66 aa)). Positions 409, 411, 419, 425, 426, 454, 458, 460, and 464 each coordinate Zn(2+). The SET domain maps to 475 to 601 (HPLVLFKTSN…AGEELSFDYI (127 aa)). Residues 486–488 (SGW), Tyr529, and 558–559 (NH) contribute to the S-adenosyl-L-methionine site. Zn(2+) is bound by residues Cys561, Cys621, Cys623, and Cys628. Positions 617-633 (ARVQCRCGAANCRKVLF) constitute a Post-SET domain.

This sequence belongs to the class V-like SAM-binding methyltransferase superfamily. Histone-lysine methyltransferase family. Suvar3-9 subfamily. In terms of assembly, interacts with Su(var)205 and Su(var)3-7. Probably associates with HDAC1/Rpd3.

The protein localises to the nucleus. Its subcellular location is the chromosome. It localises to the centromere. It catalyses the reaction L-lysyl(9)-[histone H3] + 3 S-adenosyl-L-methionine = N(6),N(6),N(6)-trimethyl-L-lysyl(9)-[histone H3] + 3 S-adenosyl-L-homocysteine + 3 H(+). Functionally, histone methyltransferase that specifically trimethylates 'Lys-9' of histone H3 using monomethylated H3 'Lys-9' as substrate. H3 'Lys-9' trimethylation represents a specific tag for epigenetic transcriptional repression by recruiting Su(var)205/HP1 to methylated histones. Mainly functions in heterochromatin regions, thereby playing a central role in the establishment of constitutive heterochromatin at pericentric regions. Involved in heterochromatic gene silencing including the modification of position-effect-variegation. This Drosophila pseudoobscura pseudoobscura (Fruit fly) protein is Histone-lysine N-methyltransferase Su(var)3-9 (Su(var)3-9).